A 394-amino-acid chain; its full sequence is Tryptophan synthase beta chain (394 aa).

K90 carries the N6-(pyridoxal phosphate)lysine modification.

This sequence belongs to the TrpB family. In terms of assembly, tetramer of two alpha and two beta chains. Requires pyridoxal 5'-phosphate as cofactor.

It carries out the reaction (1S,2R)-1-C-(indol-3-yl)glycerol 3-phosphate + L-serine = D-glyceraldehyde 3-phosphate + L-tryptophan + H2O. The protein operates within amino-acid biosynthesis; L-tryptophan biosynthesis; L-tryptophan from chorismate: step 5/5. Functionally, the beta subunit is responsible for the synthesis of L-tryptophan from indole and L-serine. In Parabacteroides distasonis (strain ATCC 8503 / DSM 20701 / CIP 104284 / JCM 5825 / NCTC 11152), this protein is Tryptophan synthase beta chain.